Consider the following 338-residue polypeptide: Galaxin (338 aa).

The N-terminal stretch at 1–23 (MKPSGAFLSLCVVLLSLATHCFS) is a signal peptide. Over residues 30 to 47 (RRDAHSDTNALKSRDRRQ) the composition is skewed to basic and acidic residues. The disordered stretch occupies residues 30–50 (RRDAHSDTNALKSRDRRQAPA).

Component of the acid-insoluble organic matrix of the aragonitic skeleton (at protein level). Initially, expressed in an aboral submarginal ring and then along calcifying septa.

It localises to the secreted. In Acropora millepora (Staghorn coral), this protein is Galaxin.